Consider the following 520-residue polypeptide: Protein nucleotidyltransferase YdiU (520 aa).

8 residues coordinate ATP: Gly108, Gly110, Arg111, Lys130, Asp142, Gly143, Arg193, and Arg200. The active-site Proton acceptor is Asp269. Residues Asn270 and Asp279 each contribute to the Mg(2+) site. Asp279 is a binding site for ATP.

The protein belongs to the SELO family. Requires Mg(2+) as cofactor. Mn(2+) is required as a cofactor.

The enzyme catalyses L-seryl-[protein] + ATP = 3-O-(5'-adenylyl)-L-seryl-[protein] + diphosphate. The catalysed reaction is L-threonyl-[protein] + ATP = 3-O-(5'-adenylyl)-L-threonyl-[protein] + diphosphate. It catalyses the reaction L-tyrosyl-[protein] + ATP = O-(5'-adenylyl)-L-tyrosyl-[protein] + diphosphate. It carries out the reaction L-histidyl-[protein] + UTP = N(tele)-(5'-uridylyl)-L-histidyl-[protein] + diphosphate. The enzyme catalyses L-seryl-[protein] + UTP = O-(5'-uridylyl)-L-seryl-[protein] + diphosphate. The catalysed reaction is L-tyrosyl-[protein] + UTP = O-(5'-uridylyl)-L-tyrosyl-[protein] + diphosphate. In terms of biological role, nucleotidyltransferase involved in the post-translational modification of proteins. It can catalyze the addition of adenosine monophosphate (AMP) or uridine monophosphate (UMP) to a protein, resulting in modifications known as AMPylation and UMPylation. The polypeptide is Protein nucleotidyltransferase YdiU (Cupriavidus pinatubonensis (strain JMP 134 / LMG 1197) (Cupriavidus necator (strain JMP 134))).